We begin with the raw amino-acid sequence, 153 residues long: Putative pre-16S rRNA nuclease (153 aa).

Belongs to the YqgF nuclease family.

The protein localises to the cytoplasm. In terms of biological role, could be a nuclease involved in processing of the 5'-end of pre-16S rRNA. The sequence is that of Putative pre-16S rRNA nuclease from Prochlorococcus marinus (strain MIT 9301).